The following is a 575-amino-acid chain: Flagellin A (575 aa).

A run of 3 repeats spans residues 405–409 (GSGFS), 411–415 (GSGFS), and 447–450 (GSGF).

It belongs to the bacterial flagellin family. In terms of assembly, heteromer of flaA and flaB.

The protein resides in the secreted. It localises to the bacterial flagellum. Flagellin is the subunit protein which polymerizes to form the filaments of bacterial flagella. This Campylobacter jejuni protein is Flagellin A (flaA).